A 206-amino-acid polypeptide reads, in one-letter code: Small ribosomal subunit protein uS4 (206 aa).

Residues 93-153 (TRLDALVLRA…PKSQTMVPFQ (61 aa)) enclose the S4 RNA-binding domain.

This sequence belongs to the universal ribosomal protein uS4 family. Part of the 30S ribosomal subunit. Contacts protein S5. The interaction surface between S4 and S5 is involved in control of translational fidelity.

Functionally, one of the primary rRNA binding proteins, it binds directly to 16S rRNA where it nucleates assembly of the body of the 30S subunit. Its function is as follows. With S5 and S12 plays an important role in translational accuracy. This Bifidobacterium animalis subsp. lactis (strain AD011) protein is Small ribosomal subunit protein uS4.